We begin with the raw amino-acid sequence, 336 residues long: 2-phospho-L-lactate transferase (336 aa).

Residue Asp49 participates in 7,8-didemethyl-8-hydroxy-5-deazariboflavin binding.

Belongs to the CofD family. As to quaternary structure, homodimer. It depends on Mg(2+) as a cofactor.

It catalyses the reaction (2S)-lactyl-2-diphospho-5'-guanosine + 7,8-didemethyl-8-hydroxy-5-deazariboflavin = oxidized coenzyme F420-0 + GMP + H(+). It functions in the pathway cofactor biosynthesis; coenzyme F420 biosynthesis. Its function is as follows. Catalyzes the transfer of the 2-phospholactate moiety from (2S)-lactyl-2-diphospho-5'-guanosine to 7,8-didemethyl-8-hydroxy-5-deazariboflavin (FO) with the formation of oxidized coenzyme F420-0 and GMP. This is 2-phospho-L-lactate transferase from Halobacterium salinarum (strain ATCC 700922 / JCM 11081 / NRC-1) (Halobacterium halobium).